Consider the following 449-residue polypeptide: Xylose isomerase (449 aa).

Residues His101 and Asp104 contribute to the active site. Positions 232, 268, 271, 296, 307, 309, and 340 each coordinate Mg(2+).

Belongs to the xylose isomerase family. In terms of assembly, homotetramer. It depends on Mg(2+) as a cofactor.

It localises to the cytoplasm. It carries out the reaction alpha-D-xylose = alpha-D-xylulofuranose. This chain is Xylose isomerase, found in Bifidobacterium longum (strain NCC 2705).